The primary structure comprises 77 residues: MAKAAKAPASFETALAQLEDIIQAMDSGDMPLETALASYKQGTELIKFCQGKLADAEQQLKILENNELKTLDLPNGQ.

Belongs to the XseB family. In terms of assembly, heterooligomer composed of large and small subunits.

It localises to the cytoplasm. It carries out the reaction Exonucleolytic cleavage in either 5'- to 3'- or 3'- to 5'-direction to yield nucleoside 5'-phosphates.. In terms of biological role, bidirectionally degrades single-stranded DNA into large acid-insoluble oligonucleotides, which are then degraded further into small acid-soluble oligonucleotides. The sequence is that of Exodeoxyribonuclease 7 small subunit from Chromobacterium violaceum (strain ATCC 12472 / DSM 30191 / JCM 1249 / CCUG 213 / NBRC 12614 / NCIMB 9131 / NCTC 9757 / MK).